A 160-amino-acid chain; its full sequence is Large ribosomal subunit protein uL22c (160 aa).

It belongs to the universal ribosomal protein uL22 family. Part of the 50S ribosomal subunit.

The protein localises to the plastid. It is found in the chloroplast. Functionally, this protein binds specifically to 23S rRNA. Its function is as follows. The globular domain of the protein is located near the polypeptide exit tunnel on the outside of the subunit, while an extended beta-hairpin is found that lines the wall of the exit tunnel in the center of the 70S ribosome. The protein is Large ribosomal subunit protein uL22c (rpl22) of Aethionema cordifolium (Lebanon stonecress).